The sequence spans 266 residues: Hydroxyacylglutathione hydrolase (266 aa).

The Zn(2+) site is built by histidine 53, histidine 55, aspartate 57, histidine 58, histidine 118, aspartate 140, and histidine 178.

It belongs to the metallo-beta-lactamase superfamily. Glyoxalase II family. As to quaternary structure, monomer. Requires Zn(2+) as cofactor.

The catalysed reaction is an S-(2-hydroxyacyl)glutathione + H2O = a 2-hydroxy carboxylate + glutathione + H(+). Its pathway is secondary metabolite metabolism; methylglyoxal degradation; (R)-lactate from methylglyoxal: step 2/2. Thiolesterase that catalyzes the hydrolysis of S-D-lactoyl-glutathione to form glutathione and D-lactic acid. The polypeptide is Hydroxyacylglutathione hydrolase (Cupriavidus taiwanensis (strain DSM 17343 / BCRC 17206 / CCUG 44338 / CIP 107171 / LMG 19424 / R1) (Ralstonia taiwanensis (strain LMG 19424))).